The sequence spans 214 residues: Heat shock protein 26 (214 aa).

S2 carries the post-translational modification N-acetylserine. T42 bears the Phosphothreonine mark. The 122-residue stretch at 86–207 (GFPRSVAVPV…KNHVKKIEVS (122 aa)) folds into the sHSP domain. Phosphoserine is present on S90. T163 carries the post-translational modification Phosphothreonine. Residues 192-214 (KPQKDGKNHVKKIEVSSQESWGN) are disordered. Residues 193 to 205 (PQKDGKNHVKKIE) show a composition bias toward basic and acidic residues. Phosphoserine is present on residues S208 and S211.

Belongs to the small heat shock protein (HSP20) family. Present in large complexes.

In terms of biological role, not known. One of the major polypeptides produced on heat shock. The protein is Heat shock protein 26 (HSP26) of Saccharomyces cerevisiae (strain ATCC 204508 / S288c) (Baker's yeast).